A 921-amino-acid polypeptide reads, in one-letter code: Isoleucine--tRNA ligase (921 aa).

Positions 57 to 67 match the 'HIGH' region motif; the sequence is PYANGELHMGH. Glu552 contributes to the L-isoleucyl-5'-AMP binding site. The 'KMSKS' region motif lies at 593-597; the sequence is KMSKS. Lys596 contributes to the ATP binding site. Zn(2+) is bound by residues Cys888, Cys891, Cys908, and Cys911.

This sequence belongs to the class-I aminoacyl-tRNA synthetase family. IleS type 1 subfamily. Monomer. The cofactor is Zn(2+).

It is found in the cytoplasm. The catalysed reaction is tRNA(Ile) + L-isoleucine + ATP = L-isoleucyl-tRNA(Ile) + AMP + diphosphate. Catalyzes the attachment of isoleucine to tRNA(Ile). As IleRS can inadvertently accommodate and process structurally similar amino acids such as valine, to avoid such errors it has two additional distinct tRNA(Ile)-dependent editing activities. One activity is designated as 'pretransfer' editing and involves the hydrolysis of activated Val-AMP. The other activity is designated 'posttransfer' editing and involves deacylation of mischarged Val-tRNA(Ile). The chain is Isoleucine--tRNA ligase from Listeria welshimeri serovar 6b (strain ATCC 35897 / DSM 20650 / CCUG 15529 / CIP 8149 / NCTC 11857 / SLCC 5334 / V8).